Consider the following 465-residue polypeptide: MTGEIITIQVGQCGNHVGKYFWNQLLKEHGIDKDGYSKYNDDLTHIREDDTNPFFKQITNNRYVPRAIMIDLEPAAVTDVQSSFNDLFNPRNTWVSSEGLGAGNSWSTGYDRGVQNQDRIMDIIDRELDSTDNFEGFQLLHSVAGGTGSGLGSSLLEALTDRYSKSFITTYSVFPSKQSEVVVGPYNTVLTLRRLCEDADASIIFDNNALLNLTARTFRDPNTSYEHTNQLISSALSSITNSLRFPSYMYNSMASIFSTLIPTPELHFLTPNFTPFTPDYIIGGQRYKKNTAYDVLLDLLDPFNSLVTQRSDMVTHFNVFSTVIGEVDQNHILRALPKMQQRLNMPSWSTSALNVNIGRRSPYLPPLESRENSVSGLMLSNTSAITSVFERSASAFDKLFYKGAFLNQFESGQLFQNGLDEFVESREVITRMMEEYSNAEQDTYLDDILNEDDIMIGGFDNEGDS.

144 to 150 is a binding site for GTP; the sequence is AGGTGSG.

It belongs to the tubulin family.

It localises to the cytoplasm. The protein resides in the cytoskeleton. It is found in the microtubule organizing center. The protein localises to the spindle pole body. In terms of biological role, tubulin is the major constituent of microtubules. The gamma chain is found at microtubule organizing centers (MTOC) such as the spindle poles or the centrosome, suggesting that it is involved in the minus-end nucleation of microtubule assembly. This is Tubulin gamma chain (TUB4) from Candida glabrata (strain ATCC 2001 / BCRC 20586 / JCM 3761 / NBRC 0622 / NRRL Y-65 / CBS 138) (Yeast).